Consider the following 291-residue polypeptide: Meteorin (291 aa).

The first 21 residues, 1-21, serve as a signal peptide directing secretion; that stretch reads MLVAALLCALCCGLLAASARA. Intrachain disulfides connect cysteine 28/cysteine 49, cysteine 80/cysteine 116, cysteine 169/cysteine 240, cysteine 172/cysteine 264, and cysteine 182/cysteine 286.

This sequence belongs to the meteorin family. As to quaternary structure, monomer.

It localises to the secreted. Involved in both glial cell differentiation and axonal network formation during neurogenesis. Promotes astrocyte differentiation and transforms cerebellar astrocytes into radial glia. Also induces axonal extension in small and intermediate neurons of sensory ganglia by activating nearby satellite glia. The polypeptide is Meteorin (Metrn) (Rattus norvegicus (Rat)).